The sequence spans 513 residues: ATP synthase subunit alpha (513 aa).

169 to 176 (GDRQCGKT) is an ATP binding site.

Belongs to the ATPase alpha/beta chains family. As to quaternary structure, F-type ATPases have 2 components, CF(1) - the catalytic core - and CF(0) - the membrane proton channel. CF(1) has five subunits: alpha(3), beta(3), gamma(1), delta(1), epsilon(1). CF(0) has three main subunits: a(1), b(2) and c(9-12). The alpha and beta chains form an alternating ring which encloses part of the gamma chain. CF(1) is attached to CF(0) by a central stalk formed by the gamma and epsilon chains, while a peripheral stalk is formed by the delta and b chains.

The protein resides in the cell inner membrane. It carries out the reaction ATP + H2O + 4 H(+)(in) = ADP + phosphate + 5 H(+)(out). Functionally, produces ATP from ADP in the presence of a proton gradient across the membrane. The alpha chain is a regulatory subunit. This is ATP synthase subunit alpha from Burkholderia cenocepacia (strain ATCC BAA-245 / DSM 16553 / LMG 16656 / NCTC 13227 / J2315 / CF5610) (Burkholderia cepacia (strain J2315)).